Consider the following 557-residue polypeptide: Putative UDP-glucuronate:xylan alpha-glucuronosyltransferase 4 (557 aa).

Residues 11–31 (KIFMIYLILVSLSLLGLILPF) form a helical; Signal-anchor for type II membrane protein membrane-spanning segment. Mn(2+) contacts are provided by Asp-365 and Asp-367. Substrate is bound by residues 365-367 (DAD), 394-396 (NSG), 421-425 (NGGDQ), and 466-471 (HYLGLK). His-466 lines the Mn(2+) pocket.

The protein belongs to the glycosyltransferase 8 family. Glycogenin subfamily. Mn(2+) serves as cofactor.

It is found in the golgi apparatus membrane. Its function is as follows. May be involved in the substitutions of the xylan backbone in stem glucuronoxylan. The sequence is that of Putative UDP-glucuronate:xylan alpha-glucuronosyltransferase 4 (GUX4) from Arabidopsis thaliana (Mouse-ear cress).